We begin with the raw amino-acid sequence, 439 residues long: UDP-N-acetylglucosamine--N-acetylmuramyl-(pentapeptide) pyrophosphoryl-undecaprenol N-acetylglucosamine transferase (439 aa).

Residues 25-27 (TGG), Arg-218, Ser-248, and Gln-362 each bind UDP-N-acetyl-alpha-D-glucosamine.

This sequence belongs to the glycosyltransferase 28 family. MurG subfamily.

It localises to the cell membrane. The enzyme catalyses di-trans,octa-cis-undecaprenyl diphospho-N-acetyl-alpha-D-muramoyl-L-alanyl-D-glutamyl-meso-2,6-diaminopimeloyl-D-alanyl-D-alanine + UDP-N-acetyl-alpha-D-glucosamine = di-trans,octa-cis-undecaprenyl diphospho-[N-acetyl-alpha-D-glucosaminyl-(1-&gt;4)]-N-acetyl-alpha-D-muramoyl-L-alanyl-D-glutamyl-meso-2,6-diaminopimeloyl-D-alanyl-D-alanine + UDP + H(+). It functions in the pathway cell wall biogenesis; peptidoglycan biosynthesis. Its function is as follows. Cell wall formation. Catalyzes the transfer of a GlcNAc subunit on undecaprenyl-pyrophosphoryl-MurNAc-pentapeptide (lipid intermediate I) to form undecaprenyl-pyrophosphoryl-MurNAc-(pentapeptide)GlcNAc (lipid intermediate II). This is UDP-N-acetylglucosamine--N-acetylmuramyl-(pentapeptide) pyrophosphoryl-undecaprenol N-acetylglucosamine transferase from Roseiflexus sp. (strain RS-1).